We begin with the raw amino-acid sequence, 328 residues long: YDG domain-containing protein At5g47150 (328 aa).

In terms of domain architecture, YDG spans 176–320 (GSVPGINIGD…KSVYKFKLCR (145 aa)).

The protein localises to the nucleus. The sequence is that of YDG domain-containing protein At5g47150 from Arabidopsis thaliana (Mouse-ear cress).